A 2610-amino-acid chain; its full sequence is E3 ubiquitin-protein ligase HECTD1 (2610 aa).

A disordered region spans residues 246 to 269 (TVSGPSSACKPGRSTTGAPSTTAD). Positions 258 to 269 (RSTTGAPSTTAD) are enriched in polar residues. 4 ANK repeats span residues 395–424 (VGQT…DVNR), 426–455 (QRSS…NPDL), 459–491 (DGKT…PVNK), and 579–612 (ITAT…DIFL). Residues 489 to 513 (VNKGDDKKKKDTNKDEEECNEPKGD) are disordered. Residues 491 to 501 (KGDDKKKKDTN) are compositionally biased toward basic and acidic residues. Disordered stretches follow at residues 627 to 657 (LAGP…ELQQ) and 707 to 748 (SSGS…LSAP). Residues S631 and S640 each carry the phosphoserine modification. A compositionally biased stretch (basic and acidic residues) spans 639 to 657 (ESKPEKEDEPQEDAKELQQ). Low complexity predominate over residues 707–717 (SSGSPEGGSDS). The span at 718-729 (SESRSEFLEKLQ) shows a compositional bias: basic and acidic residues. In terms of domain architecture, MIB/HERC2 spans 1266–1338 (VRSQVLKYMV…KFDLKLAPGY (73 aa)). Disordered regions lie at residues 1343-1406 (VASP…KTER) and 1433-1483 (ENVP…SMGI). The span at 1348 to 1365 (PVSSTVSGTTQSWSSLVK) shows a compositional bias: polar residues. Composition is skewed to low complexity over residues 1373-1395 (SAAA…ASSS) and 1441-1458 (GSSS…TGSE). S1384 bears the Phosphoserine mark. Polar residues predominate over residues 1469–1479 (SVRTPGESSAI). Residue S1488 is modified to Phosphoserine. Residues 1496–1515 (ELTNKEAASQRPLSSSASNR) are disordered. At S1567 the chain carries Phosphoserine. Disordered stretches follow at residues 1592–1611 (GAQS…VTMS) and 1674–1757 (ELDD…KGGR). Over residues 1600 to 1611 (TTPGTTSTVTMS) the composition is skewed to low complexity. A compositionally biased stretch (acidic residues) spans 1674–1703 (ELDDDEDLPEPDEEDDENEDDNQEDQEYEE). T1760 is modified (phosphothreonine). S1772 bears the Phosphoserine mark. Positions 1777–1797 (AFDPRPGRTNVQQTTDLEIPP) are disordered. Residues 2029–2103 (FTFPPDEFTS…AIVWLQNRRE (75 aa)) are K-box. In terms of domain architecture, HECT spans 2151–2610 (IHADRKSVLE…ATMEKGFHLN (460 aa)). The segment at 2297 to 2318 (HCTESQSEASTEEGHDSLSVGS) is disordered. S2318 is subject to Phosphoserine. C2579 acts as the Glycyl thioester intermediate in catalysis.

The protein belongs to the UPL family. K-HECT subfamily. In terms of assembly, interacts with IGSF1.

It carries out the reaction S-ubiquitinyl-[E2 ubiquitin-conjugating enzyme]-L-cysteine + [acceptor protein]-L-lysine = [E2 ubiquitin-conjugating enzyme]-L-cysteine + N(6)-ubiquitinyl-[acceptor protein]-L-lysine.. The protein operates within protein modification; protein ubiquitination. Functionally, E3 ubiquitin-protein ligase which accepts ubiquitin from an E2 ubiquitin-conjugating enzyme in the form of a thioester and then directly transfers the ubiquitin to targeted substrates. Mediates 'Lys-63'-linked polyubiquitination of HSP90AA1 which leads to its intracellular localization and reduced secretion. Negatively regulating HSP90AA1 secretion in cranial mesenchyme cells may impair their emigration and may be essential for the correct development of the cranial neural folds and neural tube closure. Catalyzes ubiquitination and degradation of ZNF622, an assembly factor for the ribosomal 60S subunit, in hematopoietic cells, thereby promoting hematopoietic stem cell renewal. The polypeptide is E3 ubiquitin-protein ligase HECTD1 (Homo sapiens (Human)).